A 486-amino-acid chain; its full sequence is MAKSCYFRPALLLLLVLLVHAESRGRFEPKILMPTEEANPADQDEDGVGTRWAVLVAGSSGYGNYRHQADVCHAYQILRKGGLKEENIVVLMYDDIANHPLNPRPGTLINHPDGDDVYAGVPKDYTGSSVTAANFYAVLLGDQKAVKGGSGKVIASKPNDHIFVYYADHGGPGVLGMPNTPHIYAADFIETLKKKHASGTYKEMVIYVEACESGSIFEGIMPKDLNIYVTTASNAQESSYGTYCPGMNPSPPSEYITCLGDLYSVAWMEDSETHNLKKETIKQQYHTVKMRTSNYNTYSGGSHVMEYGNNSIKSEKLYLYQGFDPATVNLPLNELPVKSKIGVVNQRDADLLFLWHMYRTSEDGSRKKDDTLKELTETTRHRKHLDASVELIATILFGPTMNVLNLVREPGLPLVDDWECLKSMVRVFEEHCGSLTQYGMKHMRAFANVCNNGVSKELMEEASTAACGGYSEARYTVHPSILGYSA.

An N-terminal signal peptide occupies residues 1–21; sequence MAKSCYFRPALLLLLVLLVHA. Residue His169 is part of the active site. The active-site Nucleophile is the Cys211. The cysteines at positions 244 and 258 are disulfide-linked. An N-linked (GlcNAc...) asparagine glycan is attached at Asn309. 2 disulfides stabilise this stretch: Cys420/Cys450 and Cys432/Cys467.

It belongs to the peptidase C13 family. Post-translationally, auto-catalytic activation. As to expression, seed specific. Also expressed in the flowers and buds.

It localises to the vacuole. The protein resides in the protein storage vacuole. The catalysed reaction is Hydrolysis of proteins and small molecule substrates at -Asn-|-Xaa- bonds.. Its function is as follows. Asparagine-specific endopeptidase involved in the processing of vacuolar seed protein precursors into the mature forms. Probably involved in post-translational proteolysis of seed storage proteins in the protein storage vacuole of developing seeds. This is Vacuolar-processing enzyme beta-isozyme from Arabidopsis thaliana (Mouse-ear cress).